A 203-amino-acid polypeptide reads, in one-letter code: Recombination protein RecR (203 aa).

Residues 56-71 (CEVCGNVSDADRCRIC) form a C4-type zinc finger. A Toprim domain is found at 79–179 (SLVCVVEEPK…TVTRIASGLP (101 aa)).

This sequence belongs to the RecR family.

May play a role in DNA repair. It seems to be involved in an RecBC-independent recombinational process of DNA repair. It may act with RecF and RecO. The protein is Recombination protein RecR of Mycobacterium sp. (strain JLS).